Here is a 150-residue protein sequence, read N- to C-terminus: Histone deacetylase complex subunit SAP18 (150 aa).

This sequence belongs to the SAP18 family. Forms a complex with SIN3 and histone deacetylase. Interacts with the N-terminal residues of TRL. Interacts with BCD; in vitro and yeast cells.

It localises to the nucleus. The protein localises to the cytoplasm. In terms of biological role, involved in the tethering of the SIN3 complex to core histone proteins. Interacts with bicoid (bcd) to repress transcription of bicoid target genes in the anterior tip of the embryo; a process known as retraction. Interacts with Trl and binds to Polycomb response elements at the bithorax complex. May contribute to the regulation of other homeotic gene expressions. The sequence is that of Histone deacetylase complex subunit SAP18 (Bin1) from Drosophila melanogaster (Fruit fly).